Reading from the N-terminus, the 307-residue chain is Ribosomal RNA small subunit methyltransferase H (307 aa).

S-adenosyl-L-methionine is bound by residues 33-35 (GGY), Asp-51, Phe-82, Asp-96, and Gln-103.

It belongs to the methyltransferase superfamily. RsmH family.

Its subcellular location is the cytoplasm. It carries out the reaction cytidine(1402) in 16S rRNA + S-adenosyl-L-methionine = N(4)-methylcytidine(1402) in 16S rRNA + S-adenosyl-L-homocysteine + H(+). Its function is as follows. Specifically methylates the N4 position of cytidine in position 1402 (C1402) of 16S rRNA. In Rickettsia peacockii (strain Rustic), this protein is Ribosomal RNA small subunit methyltransferase H.